The chain runs to 64 residues: Large ribosomal subunit protein uL30 (64 aa).

The disordered stretch occupies residues Met1 to Gly22.

The protein belongs to the universal ribosomal protein uL30 family. As to quaternary structure, part of the 50S ribosomal subunit.

The chain is Large ribosomal subunit protein uL30 from Acidiphilium cryptum (strain JF-5).